The primary structure comprises 120 residues: Large ribosomal subunit protein bL20 (120 aa).

The protein belongs to the bacterial ribosomal protein bL20 family.

Functionally, binds directly to 23S ribosomal RNA and is necessary for the in vitro assembly process of the 50S ribosomal subunit. It is not involved in the protein synthesizing functions of that subunit. The polypeptide is Large ribosomal subunit protein bL20 (Ureaplasma parvum serovar 3 (strain ATCC 27815 / 27 / NCTC 11736)).